A 367-amino-acid polypeptide reads, in one-letter code: Homoserine O-acetyltransferase (367 aa).

Residues 41–339 (NLIVLEHALT…PVGHDAFLTE (299 aa)) form the AB hydrolase-1 domain. The active-site Nucleophile is the Ser-136. Substrate is bound at residue Arg-205. Residues Asp-303 and His-333 contribute to the active site. Asp-334 contacts substrate.

The protein belongs to the AB hydrolase superfamily. MetX family. Homodimer.

The protein localises to the cytoplasm. It carries out the reaction L-homoserine + acetyl-CoA = O-acetyl-L-homoserine + CoA. The protein operates within amino-acid biosynthesis; L-methionine biosynthesis via de novo pathway; O-acetyl-L-homoserine from L-homoserine: step 1/1. Its function is as follows. Transfers an acetyl group from acetyl-CoA to L-homoserine, forming acetyl-L-homoserine. The protein is Homoserine O-acetyltransferase of Corynebacterium diphtheriae (strain ATCC 700971 / NCTC 13129 / Biotype gravis).